Here is a 944-residue protein sequence, read N- to C-terminus: Neutral alpha-glucosidase AB (944 aa).

Residues 1-28 form the signal peptide; the sequence is MAAVAAVAARRRRSWASLVLAFLGVCLG. A disulfide bridge connects residues cysteine 41 and cysteine 47. The residue at position 52 (serine 52) is a Phosphoserine. N-linked (GlcNAc...) asparagine glycosylation is present at asparagine 97. The disordered stretch occupies residues 181–238; sequence QRAPRVSQGSKDPAEGDGAQPEETPRDGDKPEETQGKAEKDEPGAWEETFKTHSDSKP. Over residues 203–236 the composition is skewed to basic and acidic residues; the sequence is ETPRDGDKPEETQGKAEKDEPGAWEETFKTHSDS. Substrate-binding residues include aspartate 283 and aspartate 429. Aspartate 542 acts as the Nucleophile in catalysis. Arginine 602 provides a ligand contact to substrate. Residue aspartate 618 is the Proton donor of the active site. Cysteine 633 and cysteine 644 form a disulfide bridge. Substrate is bound at residue histidine 676.

It belongs to the glycosyl hydrolase 31 family. As to quaternary structure, heterodimer of a catalytic alpha subunit (GANAB) and a beta subunit (PRKCSH). Binds glycosylated PTPRC. In terms of tissue distribution, detected in placenta. Isoform 1 and isoform 2 are expressed in the kidney and liver.

It localises to the endoplasmic reticulum. Its subcellular location is the golgi apparatus. The protein localises to the melanosome. The enzyme catalyses N(4)-(alpha-D-Glc-(1-&gt;3)-alpha-D-Man-(1-&gt;2)-alpha-D-Man-(1-&gt;2)-alpha-D-Man-(1-&gt;3)-[alpha-D-Man-(1-&gt;2)-alpha-D-Man-(1-&gt;3)-[alpha-D-Man-(1-&gt;2)-alpha-D-Man-(1-&gt;6)]-alpha-D-Man-(1-&gt;6)]-beta-D-Man-(1-&gt;4)-beta-D-GlcNAc-(1-&gt;4)-beta-D-GlcNAc)-L-asparaginyl-[protein] + H2O = N(4)-(alpha-D-Man-(1-&gt;2)-alpha-D-Man-(1-&gt;2)-alpha-D-Man-(1-&gt;3)-[alpha-D-Man-(1-&gt;2)-alpha-D-Man-(1-&gt;3)-[alpha-D-Man-(1-&gt;2)-alpha-D-Man-(1-&gt;6)]-alpha-D-Man-(1-&gt;6)]-beta-D-Man-(1-&gt;4)-beta-D-GlcNAc-(1-&gt;4)-beta-D-GlcNAc)-L-asparaginyl-[protein] (N-glucan mannose isomer 9A1,2,3B1,2,3) + beta-D-glucose. The catalysed reaction is N(4)-(alpha-D-Glc-(1-&gt;3)-alpha-D-Glc-(1-&gt;3)-alpha-D-Man-(1-&gt;2)-alpha-D-Man-(1-&gt;2)-alpha-D-Man-(1-&gt;3)-[alpha-D-Man-(1-&gt;2)-alpha-D-Man-(1-&gt;3)-[alpha-D-Man-(1-&gt;2)-alpha-D-Man-(1-&gt;6)]-alpha-D-Man-(1-&gt;6)]-beta-D-Man-(1-&gt;4)-beta-D-GlcNAc-(1-&gt;4)-beta-D-GlcNAc)-L-asparaginyl-[protein] + H2O = N(4)-(alpha-D-Glc-(1-&gt;3)-alpha-D-Man-(1-&gt;2)-alpha-D-Man-(1-&gt;2)-alpha-D-Man-(1-&gt;3)-[alpha-D-Man-(1-&gt;2)-alpha-D-Man-(1-&gt;3)-[alpha-D-Man-(1-&gt;2)-alpha-D-Man-(1-&gt;6)]-alpha-D-Man-(1-&gt;6)]-beta-D-Man-(1-&gt;4)-beta-D-GlcNAc-(1-&gt;4)-beta-D-GlcNAc)-L-asparaginyl-[protein] + beta-D-glucose. It functions in the pathway glycan metabolism; N-glycan metabolism. With respect to regulation, inhibited by deoxynojirimycin. Functionally, catalytic subunit of glucosidase II that cleaves sequentially the 2 innermost alpha-1,3-linked glucose residues from the Glc(2)Man(9)GlcNAc(2) oligosaccharide precursor of immature glycoproteins. Required for PKD1/Polycystin-1 and PKD2/Polycystin-2 maturation and localization to the cell surface and cilia. The sequence is that of Neutral alpha-glucosidase AB from Homo sapiens (Human).